The chain runs to 306 residues: Methionyl-tRNA formyltransferase (306 aa).

108 to 111 (SLLP) contacts (6S)-5,6,7,8-tetrahydrofolate.

This sequence belongs to the Fmt family.

The catalysed reaction is L-methionyl-tRNA(fMet) + (6R)-10-formyltetrahydrofolate = N-formyl-L-methionyl-tRNA(fMet) + (6S)-5,6,7,8-tetrahydrofolate + H(+). In terms of biological role, attaches a formyl group to the free amino group of methionyl-tRNA(fMet). The formyl group appears to play a dual role in the initiator identity of N-formylmethionyl-tRNA by promoting its recognition by IF2 and preventing the misappropriation of this tRNA by the elongation apparatus. The chain is Methionyl-tRNA formyltransferase from Pseudarthrobacter chlorophenolicus (strain ATCC 700700 / DSM 12829 / CIP 107037 / JCM 12360 / KCTC 9906 / NCIMB 13794 / A6) (Arthrobacter chlorophenolicus).